A 431-amino-acid chain; its full sequence is C2H2 type master regulator of conidiophore development brlA (431 aa).

3 disordered regions span residues methionine 29–serine 51, threonine 211–tyrosine 275, and isoleucine 287–asparagine 306. Residues threonine 30 to serine 48 are compositionally biased toward low complexity. Over residues proline 225 to methionine 265 the composition is skewed to polar residues. The span at isoleucine 287–leucine 302 shows a compositional bias: basic residues. 2 C2H2-type zinc fingers span residues phenylalanine 321–histidine 345 and histidine 351–histidine 376. Residues aspartate 390–tyrosine 412 form a disordered region.

The protein localises to the nucleus. In terms of biological role, brlA, abaA and wetA are pivotal regulators of conidiophore development and conidium maturation. They act individually and together to regulate their own expression and that of numerous other sporulation-specific genes. Binds promoters of target genes at brlA response elements (BREs) containing the conserved sequence 5'-(C/A)(A/G)AGGG(G/A)-3'. Regulates the expression levels of seven secondary metabolism gene clusters including a down-regulated cluster putatively involved in the biosynthesis of the mycotoxins roquefortine C and meleagrin. Negatively regulates the expression of cellulase genes. The protein is C2H2 type master regulator of conidiophore development brlA of Penicillium oxalicum (strain 114-2 / CGMCC 5302) (Penicillium decumbens).